The sequence spans 1275 residues: Rho1 guanine nucleotide exchange factor 3 (1275 aa).

Disordered regions lie at residues 1–42 (MKLS…SFQK), 56–113 (SPPF…NSAA), 131–188 (NNPL…SPYS), and 214–248 (LSPT…VEYL). Basic and acidic residues predominate over residues 7 to 17 (LFHRSSKDHGG). 3 stretches are compositionally biased toward polar residues: residues 32–42 (PHSSSPPSFQK), 80–113 (ASIN…NSAA), and 142–151 (SPGNKQNTVD). Composition is skewed to low complexity over residues 178–188 (SSVSSHSSPYS) and 214–228 (LSPT…SPIR). Serine 293 carries the phosphoserine modification. The DH domain occupies 465–657 (ARQNNIHELI…RATCEECDAV (193 aa)). In terms of domain architecture, PH spans 692–855 (EFFFEGIVQR…WVEKINVAKK (164 aa)). Positions 930-1239 (YGDISCIAQF…KYYPSNSDWL (310 aa)) constitute a CNH domain.

It localises to the cytoplasm. In terms of biological role, stimulates the exchange of Rho1 GDP-bound form into GTP-bound form. Regulates, via interaction and activation of Rho1, beta-1,3-glucan biosynthesis and cell wall integrity during septation. Involved in the regulation of contractile ring assembly. This is Rho1 guanine nucleotide exchange factor 3 (rgf3) from Schizosaccharomyces pombe (strain 972 / ATCC 24843) (Fission yeast).